Here is an 82-residue protein sequence, read N- to C-terminus: Small ribosomal subunit protein uS17 (82 aa).

This sequence belongs to the universal ribosomal protein uS17 family. In terms of assembly, part of the 30S ribosomal subunit.

Functionally, one of the primary rRNA binding proteins, it binds specifically to the 5'-end of 16S ribosomal RNA. This Shewanella halifaxensis (strain HAW-EB4) protein is Small ribosomal subunit protein uS17.